A 94-amino-acid polypeptide reads, in one-letter code: Integration host factor subunit beta (94 aa).

It belongs to the bacterial histone-like protein family. In terms of assembly, heterodimer of an alpha and a beta chain.

Its function is as follows. This protein is one of the two subunits of integration host factor, a specific DNA-binding protein that functions in genetic recombination as well as in transcriptional and translational control. This Dechloromonas aromatica (strain RCB) protein is Integration host factor subunit beta.